We begin with the raw amino-acid sequence, 147 residues long: UPF0306 protein YhbP (147 aa).

This sequence belongs to the UPF0306 family.

The sequence is that of UPF0306 protein YhbP from Salmonella arizonae (strain ATCC BAA-731 / CDC346-86 / RSK2980).